The chain runs to 309 residues: MQCIETNNLQQLLEQVKPYTKKGKLATYIPELGNANPDDLGIAIFHKETEYIHAGNSQTLFTLQSISKVITLALALLDRGEEYVFSKVGMEPTGDPFNSIIKLETTSPSKPLNPMINAGALAITSMLAGKDNEEKMERILHFVREITDNPTINYSSKVANSELETAYLNRSLCYYMKQNGIIDCDIEELMDLYTRQCAVEVNCIDLARIGLIFAMDGYDPYKKKQIIPKHITKICKTFMVTCGMYNESGEFAIRVGIPAKSGVAGGIFGCVKGEMGIGIFGPALDANGNSIAGFKILELLSAQEGWSIF.

Positions 65, 117, 162, 169, 193, 245, and 263 each coordinate substrate.

It belongs to the glutaminase family. Homotetramer.

It carries out the reaction L-glutamine + H2O = L-glutamate + NH4(+). The protein is Glutaminase of Bacillus cereus (strain ATCC 10987 / NRS 248).